The sequence spans 634 residues: Threonine--tRNA ligase (634 aa).

Residues 1–61 (MINIRFPDGS…NSNCELRLIT (61 aa)) enclose the TGS domain. The segment at 241–532 (DHRKIGKVLD…LIEHYAGNLP (292 aa)) is catalytic. Residues Cys332, His383, and His509 each contribute to the Zn(2+) site.

It belongs to the class-II aminoacyl-tRNA synthetase family. As to quaternary structure, homodimer. It depends on Zn(2+) as a cofactor.

It is found in the cytoplasm. The enzyme catalyses tRNA(Thr) + L-threonine + ATP = L-threonyl-tRNA(Thr) + AMP + diphosphate + H(+). Catalyzes the attachment of threonine to tRNA(Thr) in a two-step reaction: L-threonine is first activated by ATP to form Thr-AMP and then transferred to the acceptor end of tRNA(Thr). Also edits incorrectly charged L-seryl-tRNA(Thr). The polypeptide is Threonine--tRNA ligase (Francisella tularensis subsp. tularensis (strain FSC 198)).